A 359-amino-acid polypeptide reads, in one-letter code: Leafy/floricaula homolog FL1 (359 aa).

Residues 113 to 170 (SEEQVVQHSEKDQLGRAGSGDTAGTSWGAQQQRKKHRHRHHITAMKGAATEEDEEDEE) are disordered. The span at 144-155 (QRKKHRHRHHIT) shows a compositional bias: basic residues. 3 DNA-binding regions span residues 179-183 (REHPF), 248-255 (NKPKMRHY), and 320-323 (YVPT). Positions 340 to 352 (ASSASTSTSAPTA) are enriched in low complexity. The tract at residues 340–359 (ASSASTSTSAPTAHHLELPY) is disordered.

It belongs to the FLO/LFY family. As to expression, expressed strongly in the early floral primordium and then successively in the primordia of sepals, petals, stamens and carpels. Also in the leaf primordia and young leaves.

Its subcellular location is the nucleus. Functionally, probable transcription factor. This is Leafy/floricaula homolog FL1 (LF1) from Eucalyptus globulus (Tasmanian blue gum).